The sequence spans 572 residues: MPQISRQEYAGLFGPTTGDKIRLGDTNLFIEIEKDLRGYGEESVYGGGKSLRDGMGANNHLTRDNGVLDLVITNVTIVDARLGVIKADVGIRDGKIAGIGKSGNPGVMDGVTPGMVVGVSTDAISGEHLILTAAGIDSHIHLISPQQAYHALSNGVATFFGGGIGPTDGTNGTTVTPGPWNIRQMLRSVEGLPVNVGILGKGNSYGRGPLLEQAIAGVVGYKVHEDWGATANALRHSLRMADEMDIQVSVHTDSLNECGYVEDTIDAFEGRTIHTFHTEGAGGGHAPDIIRVASQPNVLPSSTNPTLPYGVNSQAELFDMIMVCHNLNPNVPADVSFAESRVRPETIAAENVLHDMGVISMFSSDSQAMGRVGENWLRVMQTANAMKASRGKLPEDAPGNDNFRVLRYVAKITINPAIAQGVSHVIGSVEVGKMADLVLWDPRFFGAKPKMVIKGGMINWAAMGDPNASLPTPQPVFYRPMFGAMGKTMQDTCVTFVSQAALDDGVKEKAGLDRQVIAVKNCRTISKHDLVRNDQTPNIEVDPETFAVKVDGVHATCEPIDTAAMNQRYFFG.

The 439-residue stretch at 134-572 (AGIDSHIHLI…AAMNQRYFFG (439 aa)) folds into the Urease domain. Ni(2+) is bound by residues H139, H141, and K222. K222 carries the N6-carboxylysine modification. A substrate-binding site is contributed by H224. 2 residues coordinate Ni(2+): H251 and H277. H325 acts as the Proton donor in catalysis. Residue D365 coordinates Ni(2+).

The protein belongs to the metallo-dependent hydrolases superfamily. Urease alpha subunit family. As to quaternary structure, heterotrimer of UreA (gamma), UreB (beta) and UreC (alpha) subunits. Three heterotrimers associate to form the active enzyme. The cofactor is Ni cation. In terms of processing, carboxylation allows a single lysine to coordinate two nickel ions.

It localises to the cytoplasm. The enzyme catalyses urea + 2 H2O + H(+) = hydrogencarbonate + 2 NH4(+). It participates in nitrogen metabolism; urea degradation; CO(2) and NH(3) from urea (urease route): step 1/1. The protein is Urease subunit alpha of Yersinia enterocolitica serotype O:8 / biotype 1B (strain NCTC 13174 / 8081).